The sequence spans 383 residues: Cytochrome b (383 aa).

4 helical membrane passes run 32–52, 76–98, 113–133, and 179–199; these read VGSL…FLAM, WLMR…LHMG, VWSM…MGYC, and FFAL…MHFM. Heme b is bound by residues histidine 82 and histidine 96. Heme b is bound by residues histidine 183 and histidine 197. Histidine 202 contributes to the a ubiquinone binding site. 4 helical membrane-spanning segments follow: residues 225-245, 289-309, 321-341, and 348-368; these read FVFK…LFVF, LGGV…PMTD, LSKL…NMGQ, and FIEL…MLVP.

It belongs to the cytochrome b family. Fungal cytochrome b-c1 complex contains 10 subunits; 3 respiratory subunits, 2 core proteins and 5 low-molecular weight proteins. Cytochrome b-c1 complex is a homodimer. Heme b serves as cofactor.

It is found in the mitochondrion inner membrane. Its function is as follows. Component of the ubiquinol-cytochrome c reductase complex (complex III or cytochrome b-c1 complex) that is part of the mitochondrial respiratory chain. The b-c1 complex mediates electron transfer from ubiquinol to cytochrome c. Contributes to the generation of a proton gradient across the mitochondrial membrane that is then used for ATP synthesis. The polypeptide is Cytochrome b (COB) (Debaryomyces hansenii (strain ATCC 36239 / CBS 767 / BCRC 21394 / JCM 1990 / NBRC 0083 / IGC 2968) (Yeast)).